The following is a 287-amino-acid chain: Acetyl-coenzyme A carboxylase carboxyl transferase subunit beta (287 aa).

One can recognise a CoA carboxyltransferase N-terminal domain in the interval 33–287 (LFSKCPGCKH…TLLAFHGGQA (255 aa)). Zn(2+)-binding residues include C37, C40, C55, and C58. The segment at 37 to 58 (CPGCKHTIYQKDLGNDSVCPNC) adopts a C4-type zinc-finger fold.

It belongs to the AccD/PCCB family. As to quaternary structure, acetyl-CoA carboxylase is a heterohexamer composed of biotin carboxyl carrier protein (AccB), biotin carboxylase (AccC) and two subunits each of ACCase subunit alpha (AccA) and ACCase subunit beta (AccD). Zn(2+) serves as cofactor.

Its subcellular location is the cytoplasm. It carries out the reaction N(6)-carboxybiotinyl-L-lysyl-[protein] + acetyl-CoA = N(6)-biotinyl-L-lysyl-[protein] + malonyl-CoA. It functions in the pathway lipid metabolism; malonyl-CoA biosynthesis; malonyl-CoA from acetyl-CoA: step 1/1. Component of the acetyl coenzyme A carboxylase (ACC) complex. Biotin carboxylase (BC) catalyzes the carboxylation of biotin on its carrier protein (BCCP) and then the CO(2) group is transferred by the transcarboxylase to acetyl-CoA to form malonyl-CoA. The sequence is that of Acetyl-coenzyme A carboxylase carboxyl transferase subunit beta from Streptococcus sanguinis (strain SK36).